The sequence spans 853 residues: Lysine-specific histone demethylase 1A (853 aa).

The segment at 1–177 (MLSGKKAAAA…EPEEPSGVEG (177 aa)) is disordered. A compositionally biased stretch (low complexity) spans 7–26 (AAAAAAAAAAAAAAGTEAGS). A Phosphothreonine modification is found at threonine 60. Positions 76 to 97 (AEPPGSAGPQAGPTAGPGSATP) are enriched in low complexity. Residue threonine 105 is modified to Phosphothreonine. A coiled-coil region spans residues 111 to 152 (TSRRKRAKVEYREMDESLANLSEDEYYSEEERNAKAEKEKKL). Phosphoserine occurs at positions 127 and 132. Tyrosine 136 carries the post-translational modification Phosphotyrosine. At serine 138 the chain carries Phosphoserine. Residues 139–152 (EEERNAKAEKEKKL) are compositionally biased toward basic and acidic residues. Acidic residues predominate over residues 161–173 (PEEENESEPEEPS). Position 167 is a phosphoserine (serine 167). The SWIRM domain maps to 175–274 (VEGAAFQSRL…FGIYKRIKPL (100 aa)). FAD is bound by residues serine 290, glutamate 309, arginine 311, arginine 317, and 333–334 (MV). The demethylase activity stretch occupies residues 301–853 (FGMDVTLLEA…GVPAQQSPSM (553 aa)). Residues 429–515 (IEHWKKIVKT…EEKLQELEAN (87 aa)) adopt a coiled-coil conformation. 3 positions are modified to N6-acetyllysine: lysine 433, lysine 434, and lysine 437. Glycyl lysine isopeptide (Lys-Gly) (interchain with G-Cter in SUMO2) cross-links involve residues lysine 443 and lysine 470. Lysine 504 is covalently cross-linked (Glycyl lysine isopeptide (Lys-Gly) (interchain with G-Cter in ubiquitin)). Serine 612 bears the Phosphoserine mark. FAD contacts are provided by residues glutamate 802 and 811 to 812 (TV). The residue at position 850 (serine 850) is a Phosphoserine.

Belongs to the flavin monoamine oxidase family. In terms of assembly, component of a histone demethylase complex with RCOR1. Component of a BHC histone deacetylase complex that contains HDAC1, HDAC2, HMG20B, KDM1A, RCOR1 and PHF21A. The BHC complex may also contain ZMYM2, ZNF217, ZMYM3, GSE1 and GTF2I. In the complex, RCOR1 strongly enhances the demethylase activity and protects it from the proteasome while PHF21A inhibits the demethylase activity. Interacts with the androgen receptor (AR). Component of a RCOR/GFI/KDM1A/HDAC complex. Interacts directly with GFI1 and GFI1B. Interacts with SNAI1 (via SNAG domain). Interacts with INSM1. Interacts (via AOD/Tower domain) with JADE2 (via C-terminus). Interacts with ESRRB; co-occupes the core set of ESRRB targets. Interacts with SAMD1 (via WH domain); the interaction modulates KDM1A function. Interacts with RBPJ. Interacts with L3MBTL3. Interacts with ZMYND8. FAD is required as a cofactor. In terms of processing, acetylated by KAT8 in epithelial but not in mesenchymal cells, thereby regulating the epithelial-to-mesenchymal transition. Acetylation by KAT8 reduces KDM1A association with nucleosomes, thereby decreasing histone H3 demethylation, leading to transcription activatio of target genes. Polyubiquitinated by JADE2; which leads to its proteasomal degradation. Deubiquitinated by USP38; preventing it from degradation by the 26S proteasome. As to expression, ubiquitously expressed.

It localises to the nucleus. It is found in the chromosome. The enzyme catalyses N(6),N(6)-dimethyl-L-lysyl(4)-[histone H3] + 2 A + 2 H2O = L-lysyl(4)-[histone H3] + 2 formaldehyde + 2 AH2. The N-terminal sequences of INSM1 and SNAI1 compete with histone H3 for the same binding site and thereby inhibit histone demethylation (in vitro). Its function is as follows. Histone demethylase that can demethylate both 'Lys-4' (H3K4me) and 'Lys-9' (H3K9me) of histone H3, thereby acting as a coactivator or a corepressor, depending on the context. Acts by oxidizing the substrate by FAD to generate the corresponding imine that is subsequently hydrolyzed. Acts as a corepressor by mediating demethylation of H3K4me, a specific tag for epigenetic transcriptional activation. Demethylates both mono- (H3K4me1) and di-methylated (H3K4me2) H3K4me. May play a role in the repression of neuronal genes. Alone, it is unable to demethylate H3K4me on nucleosomes and requires the presence of RCOR1/CoREST to achieve such activity. Also acts as a coactivator of androgen receptor (ANDR)-dependent transcription, by being recruited to ANDR target genes and mediating demethylation of H3K9me, a specific tag for epigenetic transcriptional repression. The presence of PRKCB in ANDR-containing complexes, which mediates phosphorylation of 'Thr-6' of histone H3 (H3T6ph), a specific tag that prevents demethylation H3K4me, prevents H3K4me demethylase activity of KDM1A. Demethylates di-methylated 'Lys-370' of p53/TP53 which prevents interaction of p53/TP53 with TP53BP1 and represses p53/TP53-mediated transcriptional activation. Demethylates and stabilizes the DNA methylase DNMT1. Demethylates methylated 'Lys-44' and methylated 'Lys-119' of SOX2. Required for gastrulation during embryogenesis. Component of a RCOR/GFI/KDM1A/HDAC complex that suppresses, via histone deacetylase (HDAC) recruitment, a number of genes implicated in multilineage blood cell development. Facilitates epithelial-to-mesenchymal transition by acting as an effector of SNAI1-mediated transcription repression of epithelial markers E-cadherin/CDH1, CDN7 and KRT8. Required for the maintenance of the silenced state of the SNAI1 target genes E-cadherin/CDH1 and CDN7. Required for the repression of GIPR expression. This Mus musculus (Mouse) protein is Lysine-specific histone demethylase 1A.